Reading from the N-terminus, the 230-residue chain is Ribonuclease 3 (230 aa).

Residues D10–S133 form the RNase III domain. E46 provides a ligand contact to Mg(2+). D50 is a catalytic residue. Mg(2+) is bound by residues D119 and E122. E122 is an active-site residue. The DRBM domain maps to D161–Q230.

The protein belongs to the ribonuclease III family. In terms of assembly, homodimer. The cofactor is Mg(2+).

It is found in the cytoplasm. It carries out the reaction Endonucleolytic cleavage to 5'-phosphomonoester.. In terms of biological role, digests double-stranded RNA. Involved in the processing of primary rRNA transcript to yield the immediate precursors to the large and small rRNAs (23S and 16S). Processes some mRNAs, and tRNAs when they are encoded in the rRNA operon. Processes pre-crRNA and tracrRNA of type II CRISPR loci if present in the organism. This Acinetobacter baumannii (strain SDF) protein is Ribonuclease 3.